We begin with the raw amino-acid sequence, 451 residues long: L,D-transpeptidase 5 (451 aa).

One can recognise a L,D-TPase catalytic domain in the interval 263 to 384; sequence QVVKAEVSSH…AVYGDPVEVT (122 aa). Residues Tyr323 and 337-338 contribute to the substrate site; that span reads NG. The active-site Proton donor/acceptor is the His342. Cys360 (nucleophile) is an active-site residue. Asn362 provides a ligand contact to substrate. A disordered region spans residues 417 to 451; sequence AAKPAATQIPVTAPVTPSDAPTPSGTPTTTNGPGG. Residues 437 to 451 show a composition bias toward low complexity; it reads PTPSGTPTTTNGPGG.

It participates in cell wall biogenesis; peptidoglycan biosynthesis. In contrast to other LDT paralogs, LdtMt5 is not inactivated by the beta-lactam carbapenems; beta-lactam carbapenems form covalent adducts with other LDT paralogs but the formation of covalent adducts was not detected for LdtMt5. Generates 3-&gt;3 cross-links in peptidoglycan, catalyzing the cleavage of the mDap(3)-D-Ala(4) bond of a tetrapeptide donor stem and the formation of a bond between the carbonyl of mDap(3) of the donor stem and the side chain of mDap(3) of the acceptor stem. Is specific for donor substrates containing a stem tetrapeptide since it cannot use pentapeptide stems. This Mycobacterium tuberculosis (strain ATCC 25618 / H37Rv) protein is L,D-transpeptidase 5 (lprQ).